The sequence spans 122 residues: Large ribosomal subunit protein uL14 (122 aa).

Belongs to the universal ribosomal protein uL14 family. In terms of assembly, part of the 50S ribosomal subunit. Forms a cluster with proteins L3 and L19. In the 70S ribosome, L14 and L19 interact and together make contacts with the 16S rRNA in bridges B5 and B8.

Its function is as follows. Binds to 23S rRNA. Forms part of two intersubunit bridges in the 70S ribosome. This chain is Large ribosomal subunit protein uL14, found in Levilactobacillus brevis (strain ATCC 367 / BCRC 12310 / CIP 105137 / JCM 1170 / LMG 11437 / NCIMB 947 / NCTC 947) (Lactobacillus brevis).